The sequence spans 248 residues: Agamous-like MADS-box protein AGL1 (248 aa).

The MADS-box domain maps to 18–72 (RGKIEIKRIENTTNRQVTFCKRRNGLLKKAYELSVLCDAEVALVIFSTRGRLYEY). The 91-residue stretch at 102–192 (TQYYQQEASK…RAKIAEGARL (91 aa)) folds into the K-box domain.

In terms of assembly, interacts with AGL15 and AGL16.

It is found in the nucleus. Functionally, probable transcription factor. Interacts genetically with TT16/AGL32 in a partially antagonistic manner during flower development. Is essential for the coordination of cell divisions in ovule, seed coat development and endosperm formation. The chain is Agamous-like MADS-box protein AGL1 (AGL1) from Arabidopsis thaliana (Mouse-ear cress).